Reading from the N-terminus, the 1191-residue chain is Zinc finger protein ush (1191 aa).

Disordered stretches follow at residues 1–153 (MLSS…PKYP) and 169–194 (PDAK…DTQA). The segment covering 19–28 (VDSRDSKDLS) has biased composition (basic and acidic residues). Over residues 61–73 (IDDDADEDAEFEE) the composition is skewed to acidic residues. Phosphoserine occurs at positions 116 and 118. Positions 130 to 151 (ATPPSEPEASPCPSPSPCPTPK) are enriched in pro residues. The CCHC FOG-type 1 zinc-finger motif lies at 202–235 (LLKPARFMCLPCGIAFSSPSTLEAHQAYYCSHRI). 4 residues coordinate Zn(2+): Cys210, Cys213, His226, and Cys231. The tract at residues 239-274 (DEAGSDKSGAGGSGATAGDAAGLTGGSTEPPAKMAR) is disordered. The span at 254–266 (TAGDAAGLTGGST) shows a compositional bias: low complexity. The C2H2-type 1 zinc finger occupies 279 to 301 (YGCTQCSYSADKKVSLNRHMRMH). The interval 304 to 338 (SPAAPTLAGLPSLLQNGIAPPGVTPNPMEDSSSQQ) is disordered. Residues 335 to 368 (SSQQTDRYCSHCDIRFNNIKTYRAHKQHYCSSRR) form a CCHC FOG-type 2 zinc finger. 4 residues coordinate Zn(2+): Cys343, Cys346, His359, and Cys364. 3 disordered regions span residues 361–413 (QHYC…ARNK), 504–540 (EPER…ESAP), and 601–635 (APSL…MSPP). A compositionally biased stretch (gly residues) spans 383–394 (AGSGPGSAGGSI). Low complexity-rich tracts occupy residues 509–523 (SAPS…AKSS), 602–613 (PSLPSSPSMSPS), and 620–635 (SPRS…MSPP). CCHC FOG-type zinc fingers lie at residues 720–753 (YVKK…SARS) and 791–824 (PVAY…PKGG). Cys728, Cys731, His744, Cys749, Cys799, Cys802, His815, and Cys820 together coordinate Zn(2+). 3 C2H2-type zinc fingers span residues 882-907 (NKCP…HGTV), 910-932 (YRCS…IRTH), and 983-1006 (FNCD…KLMH). Positions 1011-1073 (INSPSISPDT…HENNNSPIAT (63 aa)) are disordered. Ser1013, Ser1015, and Ser1017 each carry phosphoserine. The span at 1025-1040 (VTSNPTTNQHSNSDVS) shows a compositional bias: polar residues. The CCHC FOG-type 5 zinc-finger motif lies at 1113–1146 (AAEVMKKYCSTCDISFNYVKTYLAHKQFYCKNKP). Zn(2+)-binding residues include Cys1121, Cys1124, His1137, and Cys1142. A Phosphoserine modification is found at Ser1156.

The protein belongs to the FOG (Friend of GATA) family. As to quaternary structure, interacts with pnr, although weak this interaction is essential. Interacts with the isoform SrpNC of srp. Interacts with CtBP corepressor. As to expression, first expressed in stage 5 at high levels in the primordium of the amnioserosa. Also expressed in germ band extending embryos in cells of the developing anterior and posterior midgut and in hemocyte precursors present in the cephalic mesoderm. In embryonic stage 8, it is expressed in blood cell precursors. By stage 10, it is expressed in hemocyte precursors that have spread throughout the lateral and ventral head mesoderm. By stage 11, it is expressed in the dorsal ectoderm and in precursor cells of the hemocytes and fat body. As embryogenesis proceeds, it is also expressed in stage 13 plasmatocytes migrating throughout the head mesoderm and down the ventral midline. By late embryogenesis, expression strongly decreases but remains in the dorsal ectoderm during dorsal closure, in cells within, or associated with, the central nervous system, and in plasmatocytes circulating throughout the embryonic hemolymph. During larval development, it is expressed in primary and secondary lobes of lymph glands. Expressed in the dorsal part of the thoracic imaginal disk.

The protein localises to the nucleus. Its function is as follows. Transcription regulator that modulates expression mediated by transcription factors of the GATA family such as pnr and srp. Represses transcription of proneural achaete-scute complex (AS-C), which is usually activated by pnr. Involved in cardiogenesis, blood, and eye development. During hematopoiesis, it is required to restrict the number of crystal cells, probably via its interaction with the isoform SrpNC of srp. Negatively regulates expression of sr. Probably acts by interacting with the GATA-type zinc finger of proteins such as pnr and srp, possibly antagonizing the interaction between the GATA-type zinc finger and some cofactor. The protein is Zinc finger protein ush (ush) of Drosophila melanogaster (Fruit fly).